The primary structure comprises 446 residues: UDP-N-acetylglucosamine--dolichyl-phosphate N-acetylglucosaminephosphotransferase (446 aa).

Helical transmembrane passes span 1 to 21 (MIESCFNVGIWATGLALLMNQ) and 25 to 45 (PLLSNVGLSVLAYKATAMFIP). Residues 59–61 (KDM) and Glu71 contribute to the UDP-N-acetyl-alpha-D-glucosamine site. 2 helical membrane-spanning segments follow: residues 73–93 (MGAVSALVYFMCMIIFIPVLF) and 123–143 (LLGAYLSALLSILSVSLLGIL). A dolichyl phosphate-binding site is contributed by Lys154. 2 helical membrane-spanning segments follow: residues 155–175 (FFLPAIAAIPLLVVYYVDYGV) and 191–211 (SLINLGFLYYFYMAAVAIFCP). 208-216 (IFCPNSINI) contacts dolichyl phosphate. Asn215 lines the Mg(2+) pocket. Helical transmembrane passes span 216–236 (IIAGVNGVEAGQSLVLALVIA), 254–274 (AHLLSLYLVLPLIGVTAGLLK), 282–302 (VFVGDTFCYFAGMVMAVVGIL), and 311–331 (LFFIPQIFNFALSVPQLFGLV). UDP-N-acetyl-alpha-D-glucosamine is bound at residue Asn221. Asp286 provides a ligand contact to Mg(2+). UDP-N-acetyl-alpha-D-glucosamine is bound at residue 335 to 337 (RHR). Asn395 carries N-linked (GlcNAc...) asparagine glycosylation. A helical transmembrane segment spans residues 412-432 (DHLTICIMGLQLLTGIFGLII).

This sequence belongs to the glycosyltransferase 4 family. Mg(2+) is required as a cofactor.

The protein localises to the endoplasmic reticulum membrane. It catalyses the reaction a di-trans,poly-cis-dolichyl phosphate + UDP-N-acetyl-alpha-D-glucosamine = an N-acetyl-alpha-D-glucosaminyl-diphospho-di-trans,poly-cis-dolichol + UMP. It functions in the pathway protein modification; protein glycosylation. With respect to regulation, inhibited by natural nucleoside antibiotic tunicamycin, which acts as a structural analog and competitor of UDP-GlcNAc. In terms of biological role, UDP-N-acetylglucosamine--dolichyl-phosphate N-acetylglucosaminephosphotransferase that operates in the biosynthetic pathway of dolichol-linked oligosaccharides, the glycan precursors employed in protein asparagine (N)-glycosylation. The assembly of dolichol-linked oligosaccharides begins on the cytosolic side of the endoplasmic reticulum membrane and finishes in its lumen. The sequential addition of sugars to dolichol pyrophosphate produces dolichol-linked oligosaccharides containing fourteen sugars, including two GlcNAcs, nine mannoses and three glucoses. Once assembled, the oligosaccharide is transferred from the lipid to nascent proteins by oligosaccharyltransferases. Catalyzes the initial step of dolichol-linked oligosaccharide biosynthesis, transfering GlcNAc-1-P from cytosolic UDP-GlcNAc onto the carrier lipid dolichyl phosphate (P-dolichol), yielding GlcNAc-P-P-dolichol embedded in the cytoplasmic leaflet of the endoplasmic reticulum membrane. The polypeptide is UDP-N-acetylglucosamine--dolichyl-phosphate N-acetylglucosaminephosphotransferase (gpt2) (Schizosaccharomyces pombe (strain 972 / ATCC 24843) (Fission yeast)).